Reading from the N-terminus, the 751-residue chain is Cellulose synthase-like protein G3 (751 aa).

2 helical membrane passes run 47 to 67 (IYAV…VHSL) and 72 to 92 (TTLI…MWAT). Residues D161 and D466 contribute to the active site. 6 helical membrane-spanning segments follow: residues 543–563 (CWAF…LALL), 577–597 (FWLY…DFVL), 617–639 (FSSH…THGF), 674–694 (TVAI…FAWG), 697–717 (LVLE…IYEA), and 731–751 (VCFV…VFLK).

It belongs to the glycosyltransferase 2 family. Plant cellulose synthase-like G subfamily.

The protein localises to the golgi apparatus membrane. Its function is as follows. Thought to be a Golgi-localized beta-glycan synthase that polymerize the backbones of noncellulosic polysaccharides (hemicelluloses) of plant cell wall. This chain is Cellulose synthase-like protein G3 (CSLG3), found in Arabidopsis thaliana (Mouse-ear cress).